The primary structure comprises 98 residues: NADH-ubiquinone oxidoreductase chain 4L (98 aa).

A run of 3 helical transmembrane segments spans residues methionine 1 to leucine 21, serine 29 to leucine 49, and isoleucine 61 to valine 81.

This sequence belongs to the complex I subunit 4L family. Core subunit of respiratory chain NADH dehydrogenase (Complex I) which is composed of 45 different subunits.

Its subcellular location is the mitochondrion inner membrane. It catalyses the reaction a ubiquinone + NADH + 5 H(+)(in) = a ubiquinol + NAD(+) + 4 H(+)(out). Its function is as follows. Core subunit of the mitochondrial membrane respiratory chain NADH dehydrogenase (Complex I) which catalyzes electron transfer from NADH through the respiratory chain, using ubiquinone as an electron acceptor. Part of the enzyme membrane arm which is embedded in the lipid bilayer and involved in proton translocation. The protein is NADH-ubiquinone oxidoreductase chain 4L (MT-ND4L) of Platyrrhinus dorsalis (Thomas's broad-nosed bat).